The chain runs to 423 residues: Putative competence-damage inducible protein (423 aa).

The protein belongs to the CinA family.

In Streptococcus pyogenes serotype M4 (strain MGAS10750), this protein is Putative competence-damage inducible protein.